A 117-amino-acid polypeptide reads, in one-letter code: Large ribosomal subunit protein uL18 (117 aa).

The protein belongs to the universal ribosomal protein uL18 family. As to quaternary structure, part of the 50S ribosomal subunit; part of the 5S rRNA/L5/L18/L25 subcomplex. Contacts the 5S and 23S rRNAs.

In terms of biological role, this is one of the proteins that bind and probably mediate the attachment of the 5S RNA into the large ribosomal subunit, where it forms part of the central protuberance. The sequence is that of Large ribosomal subunit protein uL18 from Photorhabdus laumondii subsp. laumondii (strain DSM 15139 / CIP 105565 / TT01) (Photorhabdus luminescens subsp. laumondii).